The chain runs to 632 residues: Chaperone protein DnaK (632 aa).

Thr-199 is subject to Phosphothreonine; by autocatalysis. Over residues 597–611 the composition is skewed to low complexity; it reads AAQQAGQAEGQAAQE. The disordered stretch occupies residues 597 to 632; the sequence is AAQQAGQAEGQAAQEPSQSTGNAQAEATDAEYEEVK. Over residues 612–621 the composition is skewed to polar residues; sequence PSQSTGNAQA.

This sequence belongs to the heat shock protein 70 family.

Its function is as follows. Acts as a chaperone. This is Chaperone protein DnaK from Amoebophilus asiaticus (strain 5a2).